We begin with the raw amino-acid sequence, 206 residues long: Small ribosomal subunit protein uS4 (206 aa).

An S4 RNA-binding domain is found at 98–163 (MRLDNIVYRL…SEKFKTFVEN (66 aa)).

Belongs to the universal ribosomal protein uS4 family. In terms of assembly, part of the 30S ribosomal subunit. Contacts protein S5. The interaction surface between S4 and S5 is involved in control of translational fidelity.

One of the primary rRNA binding proteins, it binds directly to 16S rRNA where it nucleates assembly of the body of the 30S subunit. Functionally, with S5 and S12 plays an important role in translational accuracy. The protein is Small ribosomal subunit protein uS4 of Clostridium beijerinckii (strain ATCC 51743 / NCIMB 8052) (Clostridium acetobutylicum).